The primary structure comprises 453 residues: UDP-N-acetylmuramoylalanine--D-glutamate ligase (453 aa).

120 to 126 (GSNGKST) is a binding site for ATP.

The protein belongs to the MurCDEF family.

The protein localises to the cytoplasm. It catalyses the reaction UDP-N-acetyl-alpha-D-muramoyl-L-alanine + D-glutamate + ATP = UDP-N-acetyl-alpha-D-muramoyl-L-alanyl-D-glutamate + ADP + phosphate + H(+). The protein operates within cell wall biogenesis; peptidoglycan biosynthesis. Cell wall formation. Catalyzes the addition of glutamate to the nucleotide precursor UDP-N-acetylmuramoyl-L-alanine (UMA). This chain is UDP-N-acetylmuramoylalanine--D-glutamate ligase, found in Teredinibacter turnerae (strain ATCC 39867 / T7901).